Consider the following 505-residue polypeptide: ATP synthase subunit alpha (505 aa).

Position 169–176 (169–176 (GDRQTGKT)) interacts with ATP.

This sequence belongs to the ATPase alpha/beta chains family. As to quaternary structure, F-type ATPases have 2 components, CF(1) - the catalytic core - and CF(0) - the membrane proton channel. CF(1) has five subunits: alpha(3), beta(3), gamma(1), delta(1), epsilon(1). CF(0) has three main subunits: a(1), b(2) and c(9-12). The alpha and beta chains form an alternating ring which encloses part of the gamma chain. CF(1) is attached to CF(0) by a central stalk formed by the gamma and epsilon chains, while a peripheral stalk is formed by the delta and b chains.

Its subcellular location is the cell membrane. The enzyme catalyses ATP + H2O + 4 H(+)(in) = ADP + phosphate + 5 H(+)(out). Produces ATP from ADP in the presence of a proton gradient across the membrane. The alpha chain is a regulatory subunit. The polypeptide is ATP synthase subunit alpha (Clostridium acetobutylicum (strain ATCC 824 / DSM 792 / JCM 1419 / IAM 19013 / LMG 5710 / NBRC 13948 / NRRL B-527 / VKM B-1787 / 2291 / W)).